We begin with the raw amino-acid sequence, 263 residues long: 3-methyl-2-oxobutanoate hydroxymethyltransferase (263 aa).

Mg(2+) is bound by residues Asp-45 and Asp-84. 3-methyl-2-oxobutanoate-binding positions include 45–46 (DS), Asp-84, and Lys-113. Residue Glu-115 participates in Mg(2+) binding. The active-site Proton acceptor is Glu-182.

The protein belongs to the PanB family. As to quaternary structure, homodecamer; pentamer of dimers. Requires Mg(2+) as cofactor.

It is found in the cytoplasm. It carries out the reaction 3-methyl-2-oxobutanoate + (6R)-5,10-methylene-5,6,7,8-tetrahydrofolate + H2O = 2-dehydropantoate + (6S)-5,6,7,8-tetrahydrofolate. It participates in cofactor biosynthesis; coenzyme A biosynthesis. Its function is as follows. Catalyzes the reversible reaction in which hydroxymethyl group from 5,10-methylenetetrahydrofolate is transferred onto alpha-ketoisovalerate to form ketopantoate. This Ignicoccus hospitalis (strain KIN4/I / DSM 18386 / JCM 14125) protein is 3-methyl-2-oxobutanoate hydroxymethyltransferase.